The following is a 694-amino-acid chain: MATPLKLYRNIGIAAHVDAGKTTTTERVLYYTGMSHKIGEVHDGAATMDWMVQEQERGITITSAATTCYWSGMDKQFESHRINIIDTPGHVDFMIEVERSLRVLDGAVVVFDSVAGVEPQSETVWRQANKYGVPRIVFVNKMDRMGANFLRVVSQIKQRLGSTPVVLQLPIGAEEEFKGVIDLIKMKAIQWDEENKGMTFKYVDIPADLKATCEEYRAHIIEAAAEYSEELMEKYLEGEEFTEAEIKKALRHLTITNKVVPVFCGSAFKNKGVQAVLDGVIEYLPSPTDIPDIQGVDEHGDEIHRKTSYDEPFSALAFKIATDPFVGTLTYFRAYSGILKSGDTVYNSVKGKKERIGRLLQMHANSREEIKEVRAGDIAAAVGLKTVTTGDTLCDQDKVVILERMDFPDPVIAVAVEPKTKADQEKMGIALGKLAQEDPSFRVHTDEESGQTIIQGMGELHLEIIVDRMKREFNVEANVGKPQVAYRETLKQAIEQEGKFVRQSGGRGQYGHVWLKIEPQEPGKGYEFINAIVGGVIPKEYIPAVDKGIQEQMQNGVIAGYPVVDVKVTLFDGSFHEVDSSEMAFKIAGSQCFKQGALKAKPVLLEPIMSVEVVTPEDYMGDVMGDLNRRRGLVQGMEDSPAGKIVRAEVPLAEMFGYSTDLRSATQGRATYTMEFCKYAEAPTNIAEAIIKKQ.

In terms of domain architecture, tr-type G spans Lys-6 to Thr-288. GTP is bound by residues Ala-15–Thr-22, Asp-86–His-90, and Asn-140–Asp-143.

The protein belongs to the TRAFAC class translation factor GTPase superfamily. Classic translation factor GTPase family. EF-G/EF-2 subfamily.

The protein localises to the cytoplasm. Its function is as follows. Catalyzes the GTP-dependent ribosomal translocation step during translation elongation. During this step, the ribosome changes from the pre-translocational (PRE) to the post-translocational (POST) state as the newly formed A-site-bound peptidyl-tRNA and P-site-bound deacylated tRNA move to the P and E sites, respectively. Catalyzes the coordinated movement of the two tRNA molecules, the mRNA and conformational changes in the ribosome. This Legionella pneumophila (strain Lens) protein is Elongation factor G.